Here is a 1594-residue protein sequence, read N- to C-terminus: Calpain-D (1594 aa).

2 consecutive RanBP2-type zinc fingers follow at residues 1–35 and 135–164; these read MGTI…VRKV and LNRR…VSYL. 5 disordered regions span residues 210–256, 371–400, 420–459, 524–543, and 554–606; these read EEQH…TAID, EPQQ…NPTQ, ASSS…SSSG, KKKQ…GSGE, and AGLG…RLSG. The span at 215-229 shows a compositional bias: basic residues; that stretch reads HQLHSQHLHKRHLKG. Composition is skewed to polar residues over residues 246-255 and 371-385; these read RRTQSLSTAI and EPQQ…QLQR. Position 250 is a phosphoserine (Ser250). Residues 438–459 show a composition bias toward low complexity; it reads NSNSNSSGNSNIINNNSSSSSG. Over residues 528 to 541 the composition is skewed to polar residues; the sequence is QIASESQTNNNTGS. The segment at 643 to 673 adopts a RanBP2-type 3 zinc-finger fold; the sequence is RSKMWICIKCSYAYNRLWLQTCEMCEAKAEQ. Residues 684-703 form a disordered region; it reads QQQQQQHHHHHLQQQQAEAP. RanBP2-type zinc fingers lie at residues 704–733 and 744–774; these read RDEP…SKLK and RKGE…HRQP. Disordered stretches follow at residues 786-811 and 860-884; these read RPDG…HQSG and SLQQ…GSIV. The segment covering 860-871 has biased composition (polar residues); that stretch reads SLQQQRNSSSSG. A RanBP2-type 6 zinc finger spans residues 927–956; it reads STKKWQCPACTYDNCAASVVCDICSSPRGL. The 308-residue stretch at 1014–1321 folds into the Calpain catalytic domain; the sequence is LFVDDSFPPA…FDCIDICKVR (308 aa). Active-site residues include Cys1079, His1245, and Asn1265.

It belongs to the peptidase C2 family.

Has a role in eye development. Its function is as follows. Calcium-regulated non-lysosomal thiol-protease. The chain is Calpain-D (sol) from Drosophila melanogaster (Fruit fly).